Consider the following 173-residue polypeptide: Protein-export protein SecB 1 (173 aa).

It belongs to the SecB family. In terms of assembly, homotetramer, a dimer of dimers. One homotetramer interacts with 1 SecA dimer.

The protein localises to the cytoplasm. One of the proteins required for the normal export of preproteins out of the cell cytoplasm. It is a molecular chaperone that binds to a subset of precursor proteins, maintaining them in a translocation-competent state. It also specifically binds to its receptor SecA. This Gluconobacter oxydans (strain 621H) (Gluconobacter suboxydans) protein is Protein-export protein SecB 1.